We begin with the raw amino-acid sequence, 86 residues long: Small ribosomal subunit protein bS20 (86 aa).

The segment at 1–27 is disordered; sequence MANSKQAKKRAGQSEKRRQHNASRRSM.

This sequence belongs to the bacterial ribosomal protein bS20 family.

Functionally, binds directly to 16S ribosomal RNA. In Colwellia psychrerythraea (strain 34H / ATCC BAA-681) (Vibrio psychroerythus), this protein is Small ribosomal subunit protein bS20.